Consider the following 380-residue polypeptide: Cytochrome b (380 aa).

4 consecutive transmembrane segments (helical) span residues phenylalanine 33–methionine 53, tryptophan 77–isoleucine 98, tryptophan 113–leucine 133, and phenylalanine 178–leucine 198. The heme b site is built by histidine 83 and histidine 97. Heme b-binding residues include histidine 182 and histidine 196. Histidine 201 contributes to the a ubiquinone binding site. The next 4 helical transmembrane spans lie at tyrosine 226 to alanine 246, leucine 288 to histidine 308, leucine 320 to glycine 340, and phenylalanine 347 to proline 367.

It belongs to the cytochrome b family. In terms of assembly, the cytochrome bc1 complex contains 3 respiratory subunits (MT-CYB, CYC1 and UQCRFS1), 2 core proteins (UQCRC1 and UQCRC2) and probably 6 low-molecular weight proteins. Requires heme b as cofactor.

The protein localises to the mitochondrion inner membrane. Functionally, component of the ubiquinol-cytochrome c reductase complex (complex III or cytochrome b-c1 complex) that is part of the mitochondrial respiratory chain. The b-c1 complex mediates electron transfer from ubiquinol to cytochrome c. Contributes to the generation of a proton gradient across the mitochondrial membrane that is then used for ATP synthesis. The chain is Cytochrome b (mt-cyb) from Gadus morhua (Atlantic cod).